Consider the following 271-residue polypeptide: Protein MGF 360-15R (271 aa).

This sequence belongs to the asfivirus MGF 360 family.

In terms of biological role, plays a role in virus cell tropism, and may be required for efficient virus replication in macrophages. This is Protein MGF 360-15R from African swine fever virus (isolate Tick/Malawi/Lil 20-1/1983) (ASFV).